The sequence spans 261 residues: uncharacterized protein (261 aa).

The protein resides in the plastid. The protein localises to the chloroplast. This is an uncharacterized protein from Mesostigma viride (Green alga).